Consider the following 574-residue polypeptide: Excitatory amino acid transporter 2 (574 aa).

Residues 1-44 (MASTEGANNMPKQVEVRMHDSHLGSEEPKHRHLGLRLCDKLGKN) are Cytoplasmic-facing. 3 positions are modified to phosphoserine: Ser3, Ser21, and Ser25. The S-palmitoyl cysteine moiety is linked to residue Cys38. A helical membrane pass occupies residues 45–64 (LLLTLTVFGVILGAVCGGLL). Topologically, residues 65 to 87 (RLASPIHPDVVMLIAFPGDILMR) are extracellular. Residues 88–108 (MLKMLILPLIISSLITGLSGL) form a helical membrane-spanning segment. At 109–120 (DAKASGRLGTRA) the chain is on the cytoplasmic side. The helical transmembrane segment at 121–142 (MVYYMSTTIIAAVLGVILVLAI) threads the bilayer. The Extracellular segment spans residues 143–235 (HPGNPKLKKQ…TKMVIKKGLE (93 aa)). 2 N-linked (GlcNAc...) asparagine glycosylation sites follow: Asn206 and Asn216. Residues 236-259 (FKDGMNVLGLIGFFIAFGIAMGKM) traverse the membrane as a helical segment. At 260–268 (GDQAKLMVD) the chain is on the cytoplasmic side. A helical membrane pass occupies residues 269–296 (FFNILNEIVMKLVIMIMWYSPLGIACLI). Residues 297-317 (CGKIIAIKDLEVVARQLGMYM) are Extracellular-facing. Residues 318–339 (VTVIIGLIIHGGIFLPLIYFVV) traverse the membrane as a helical segment. At 340-344 (TRKNP) the chain is on the cytoplasmic side. The discontinuously helical intramembrane region spans 345-375 (FSFFAGIFQAWITALGTASSAGTLPVTFRCL). An L-aspartate-binding site is contributed by 362–364 (ASS). At 376–384 (EENLGIDKR) the chain is on the cytoplasmic side. Residues 385-411 (VTRFVLPVGATINMDGTALYEAVAAIF) form a helical membrane-spanning segment. Na(+)-binding residues include Gly393, Thr395, and Asn397. Thr401 serves as a coordination point for L-aspartate. At 412 to 424 (IAQMNGVVLDGGQ) the chain is on the extracellular side. An intramembrane region (discontinuously helical) is located at residues 425-458 (IVTVSLTATLASVGAASIPSAGLVTMLLILTAVG). 442 to 446 (IPSAG) lines the L-aspartate pocket. At 459 to 471 (LPTEDISLLVAVD) the chain is on the extracellular side. Residues 472 to 493 (WLLDRMRTSVNVVGDSFGAGIV) form a helical membrane-spanning segment. Positions 475 and 482 each coordinate L-aspartate. Na(+)-binding residues include Asn482 and Asp486. Residues 494-574 (YHLSKSELDT…VEEEPWKREK (81 aa)) are Cytoplasmic-facing. 4 positions are modified to phosphoserine: Ser506, Ser521, Ser532, and Ser534. Tyr539 carries the post-translational modification Phosphotyrosine. Phosphoserine is present on residues Ser544, Ser560, and Ser564.

Belongs to the dicarboxylate/amino acid:cation symporter (DAACS) (TC 2.A.23) family. SLC1A2 subfamily. Homotrimer. Isoform 3 can oligomerize with isoform 1. Interacts with AJUBA. In terms of processing, glycosylated. Palmitoylation at Cys-38 is not required for correct subcellular localization, but is important for glutamate uptake activity.

The protein localises to the cell membrane. It catalyses the reaction K(+)(in) + L-glutamate(out) + 3 Na(+)(out) + H(+)(out) = K(+)(out) + L-glutamate(in) + 3 Na(+)(in) + H(+)(in). The enzyme catalyses K(+)(in) + L-aspartate(out) + 3 Na(+)(out) + H(+)(out) = K(+)(out) + L-aspartate(in) + 3 Na(+)(in) + H(+)(in). It carries out the reaction D-aspartate(out) + K(+)(in) + 3 Na(+)(out) + H(+)(out) = D-aspartate(in) + K(+)(out) + 3 Na(+)(in) + H(+)(in). Its function is as follows. Sodium-dependent, high-affinity amino acid transporter that mediates the uptake of L-glutamate and also L-aspartate and D-aspartate. Functions as a symporter that transports one amino acid molecule together with two or three Na(+) ions and one proton, in parallel with the counter-transport of one K(+) ion. Mediates Cl(-) flux that is not coupled to amino acid transport; this avoids the accumulation of negative charges due to aspartate and Na(+) symport. Essential for the rapid removal of released glutamate from the synaptic cleft, and for terminating the postsynaptic action of glutamate. This is Excitatory amino acid transporter 2 from Homo sapiens (Human).